A 270-amino-acid polypeptide reads, in one-letter code: Orotidine 5'-phosphate decarboxylase (270 aa).

Substrate contacts are provided by residues Asp39, 61–63 (KTH), 93–102 (DRKFADIGNT), Tyr221, and Arg239. The Proton donor role is filled by Lys95.

It belongs to the OMP decarboxylase family.

It catalyses the reaction orotidine 5'-phosphate + H(+) = UMP + CO2. It functions in the pathway pyrimidine metabolism; UMP biosynthesis via de novo pathway; UMP from orotate: step 2/2. In Candida dubliniensis (strain CD36 / ATCC MYA-646 / CBS 7987 / NCPF 3949 / NRRL Y-17841) (Yeast), this protein is Orotidine 5'-phosphate decarboxylase (URA3).